Consider the following 344-residue polypeptide: Selenide, water dikinase (344 aa).

Cys-16 is an active-site residue. ATP is bound by residues Lys-19 and 47 to 49 (SRD). Asp-50 serves as a coordination point for Mg(2+). ATP is bound by residues Asp-67, Asp-90, and 138–140 (GHS). Mg(2+) is bound at residue Asp-90. Position 226 (Asp-226) interacts with Mg(2+).

The protein belongs to the selenophosphate synthase 1 family. Class I subfamily. Homodimer. It depends on Mg(2+) as a cofactor.

The enzyme catalyses hydrogenselenide + ATP + H2O = selenophosphate + AMP + phosphate + 2 H(+). Synthesizes selenophosphate from selenide and ATP. This chain is Selenide, water dikinase, found in Pseudomonas aeruginosa (strain ATCC 15692 / DSM 22644 / CIP 104116 / JCM 14847 / LMG 12228 / 1C / PRS 101 / PAO1).